We begin with the raw amino-acid sequence, 337 residues long: Metacaspase III c (337 aa).

2 propeptides span residues 1–6 (MGFLRR) and 116–125 (VPPAATGTRR). Cys-202 carries the cysteine sulfenic acid (-SOH) modification. Cys-202 and Cys-259 are joined by a disulfide. Residue His-207 is part of the active site. Ca(2+) is bound by residues Asp-224, Asp-240, and Asp-241. Cys-264 is a catalytic residue. Asp-271 is a Ca(2+) binding site. Positions 290-337 (NFDFKKLLGKFGIDDFDKFGGEALGKINGDALGKVGKDALGKLNKFFG) are excised as a propeptide.

Belongs to the peptidase C14B family. In terms of processing, auto-proteolytic cleavage into a large and a small subunit which probably remain associated by non-covalent bonds. Following oxidative stress, the oxidation of Cys-202 leads to the formation of a disulfide bond between Cys-202 and Cys-259 which enhances catalytic activity.

Its activity is regulated as follows. Activated by Ca(2+). Cysteine protease that cleaves specifically after arginine residues. In Phaeodactylum tricornutum (strain CCAP 1055/1), this protein is Metacaspase III c.